We begin with the raw amino-acid sequence, 142 residues long: Large ribosomal subunit protein uL11 (142 aa).

The protein belongs to the universal ribosomal protein uL11 family. In terms of assembly, part of the ribosomal stalk of the 50S ribosomal subunit. Interacts with L10 and the large rRNA to form the base of the stalk. L10 forms an elongated spine to which L12 dimers bind in a sequential fashion forming a multimeric L10(L12)X complex. One or more lysine residues are methylated.

Functionally, forms part of the ribosomal stalk which helps the ribosome interact with GTP-bound translation factors. This is Large ribosomal subunit protein uL11 from Vibrio vulnificus (strain CMCP6).